We begin with the raw amino-acid sequence, 212 residues long: Thiamine-phosphate synthase (212 aa).

4-amino-2-methyl-5-(diphosphooxymethyl)pyrimidine-binding positions include 35–39 and asparagine 67; that span reads QLRRK. Aspartate 68 and aspartate 87 together coordinate Mg(2+). Residue serine 106 participates in 4-amino-2-methyl-5-(diphosphooxymethyl)pyrimidine binding. Residue 132–134 participates in 2-[(2R,5Z)-2-carboxy-4-methylthiazol-5(2H)-ylidene]ethyl phosphate binding; the sequence is TGS. Lysine 135 contacts 4-amino-2-methyl-5-(diphosphooxymethyl)pyrimidine. Residues glycine 163 and 183 to 184 contribute to the 2-[(2R,5Z)-2-carboxy-4-methylthiazol-5(2H)-ylidene]ethyl phosphate site; that span reads IS.

Belongs to the thiamine-phosphate synthase family. The cofactor is Mg(2+).

It carries out the reaction 2-[(2R,5Z)-2-carboxy-4-methylthiazol-5(2H)-ylidene]ethyl phosphate + 4-amino-2-methyl-5-(diphosphooxymethyl)pyrimidine + 2 H(+) = thiamine phosphate + CO2 + diphosphate. It catalyses the reaction 2-(2-carboxy-4-methylthiazol-5-yl)ethyl phosphate + 4-amino-2-methyl-5-(diphosphooxymethyl)pyrimidine + 2 H(+) = thiamine phosphate + CO2 + diphosphate. The catalysed reaction is 4-methyl-5-(2-phosphooxyethyl)-thiazole + 4-amino-2-methyl-5-(diphosphooxymethyl)pyrimidine + H(+) = thiamine phosphate + diphosphate. It functions in the pathway cofactor biosynthesis; thiamine diphosphate biosynthesis; thiamine phosphate from 4-amino-2-methyl-5-diphosphomethylpyrimidine and 4-methyl-5-(2-phosphoethyl)-thiazole: step 1/1. Its function is as follows. Condenses 4-methyl-5-(beta-hydroxyethyl)thiazole monophosphate (THZ-P) and 2-methyl-4-amino-5-hydroxymethyl pyrimidine pyrophosphate (HMP-PP) to form thiamine monophosphate (TMP). The polypeptide is Thiamine-phosphate synthase (Chlorobium luteolum (strain DSM 273 / BCRC 81028 / 2530) (Pelodictyon luteolum)).